The following is a 180-amino-acid chain: NAD(P)H-quinone oxidoreductase subunit I, chloroplastic (180 aa).

4Fe-4S ferredoxin-type domains are found at residues 55-84 (GRIH…VDWR) and 95-124 (LNYS…MTEE). 8 residues coordinate [4Fe-4S] cluster: C64, C67, C70, C74, C104, C107, C110, and C114.

Belongs to the complex I 23 kDa subunit family. NDH is composed of at least 16 different subunits, 5 of which are encoded in the nucleus. The cofactor is [4Fe-4S] cluster.

It localises to the plastid. The protein resides in the chloroplast thylakoid membrane. It catalyses the reaction a plastoquinone + NADH + (n+1) H(+)(in) = a plastoquinol + NAD(+) + n H(+)(out). The enzyme catalyses a plastoquinone + NADPH + (n+1) H(+)(in) = a plastoquinol + NADP(+) + n H(+)(out). NDH shuttles electrons from NAD(P)H:plastoquinone, via FMN and iron-sulfur (Fe-S) centers, to quinones in the photosynthetic chain and possibly in a chloroplast respiratory chain. The immediate electron acceptor for the enzyme in this species is believed to be plastoquinone. Couples the redox reaction to proton translocation, and thus conserves the redox energy in a proton gradient. The sequence is that of NAD(P)H-quinone oxidoreductase subunit I, chloroplastic from Illicium oligandrum (Star anise).